The primary structure comprises 528 residues: T-complex protein 1 subunit delta (528 aa).

It belongs to the TCP-1 chaperonin family. As to quaternary structure, heterooligomeric complex of about 850 to 900 kDa that forms two stacked rings, 12 to 16 nm in diameter.

It localises to the cytoplasm. Functionally, molecular chaperone; assists the folding of proteins upon ATP hydrolysis. Known to play a role, in vitro, in the folding of actin and tubulin. In yeast may play a role in mitotic spindle formation. The polypeptide is T-complex protein 1 subunit delta (CCT4) (Saccharomyces cerevisiae (strain ATCC 204508 / S288c) (Baker's yeast)).